The primary structure comprises 402 residues: Bacillibactin exporter (402 aa).

Transmembrane regions (helical) follow at residues 4–24 (IIAL…LIPV), 39–59 (VSLI…IAGY), 69–89 (ILLP…FAST), 104–124 (LQGI…GDLF), 162–182 (FVPF…VLFL), 212–232 (WLYT…GVLF), 247–267 (VAKG…SFIA), 278–298 (MKFC…ALWW), 302–322 (FYFL…ALPA), 342–362 (FYNS…AALM), and 368–388 (IIFI…LFTV).

Belongs to the major facilitator superfamily.

The protein localises to the cell membrane. In terms of biological role, involved in secretion of bacillibactin. In Bacillus subtilis (strain 168), this protein is Bacillibactin exporter (ymfD).